Reading from the N-terminus, the 175-residue chain is Cuticle protein CP1876 (175 aa).

Calcified shell.

This is Cuticle protein CP1876 from Cancer pagurus (Rock crab).